A 331-amino-acid polypeptide reads, in one-letter code: MKIAIDAMGGDFAPENIVKGVNLAKKELSDVTFQLYGDGAKIRQFLDDETNIEIVETTEIIDFHDDPVAAIKSKKDSSLVRAVTAVKKGEADAVLSAGSTGALLTAGLLLVKRIKQVSRPALMSTLPTADGRGFDMLDLGANTENTAHHLVDFAILGSYYAENVRGINKPRVALISNGAEESKGSPTVKEAHEILSAMSEINFIGNIESRDLLSGGADVVVTDGFTGNAILKAIEGTATVLMKEIKSAIMAGSVTTKIGGALIKKPLSVLKDLMSTDGAGGAAFVGLKAPVVKAHGNSSELAIASALKQIHKMLESDVSGKLVEHFEKMDK.

This sequence belongs to the PlsX family. In terms of assembly, homodimer. Probably interacts with PlsY.

Its subcellular location is the cytoplasm. The enzyme catalyses a fatty acyl-[ACP] + phosphate = an acyl phosphate + holo-[ACP]. The protein operates within lipid metabolism; phospholipid metabolism. Catalyzes the reversible formation of acyl-phosphate (acyl-PO(4)) from acyl-[acyl-carrier-protein] (acyl-ACP). This enzyme utilizes acyl-ACP as fatty acyl donor, but not acyl-CoA. This chain is Phosphate acyltransferase, found in Lactococcus lactis subsp. lactis (strain IL1403) (Streptococcus lactis).